The following is a 75-amino-acid chain: MGSFSIWHWLIVLVIVVLVFGTKKLRNVGQDLGGAVKGFKDGMRDSEKSGEDVQQKIGGDTLDAQATDKSHTVSH.

A helical transmembrane segment spans residues 1–21; the sequence is MGSFSIWHWLIVLVIVVLVFG. Basic and acidic residues-rich tracts occupy residues 43 to 54 and 66 to 75; these read MRDSEKSGEDVQ and ATDKSHTVSH. A disordered region spans residues 43–75; it reads MRDSEKSGEDVQQKIGGDTLDAQATDKSHTVSH.

Belongs to the TatA/E family. The Tat system comprises two distinct complexes: a TatABC complex, containing multiple copies of TatA, TatB and TatC subunits, and a separate TatA complex, containing only TatA subunits. Substrates initially bind to the TatABC complex, which probably triggers association of the separate TatA complex to form the active translocon.

The protein localises to the cell inner membrane. In terms of biological role, part of the twin-arginine translocation (Tat) system that transports large folded proteins containing a characteristic twin-arginine motif in their signal peptide across membranes. TatA could form the protein-conducting channel of the Tat system. The protein is Sec-independent protein translocase protein TatA of Aromatoleum aromaticum (strain DSM 19018 / LMG 30748 / EbN1) (Azoarcus sp. (strain EbN1)).